Reading from the N-terminus, the 459-residue chain is Friend virus susceptibility protein 1 (459 aa).

Positions 192–269 (EAELPTVLAS…LNSLAHSNRQ (78 aa)) are disordered. The segment covering 213–223 (SKERTQQDKAD) has biased composition (basic and acidic residues). Positions 226-238 (QIQSSTSLVTSEP) are enriched in polar residues.

Its function is as follows. Retroviral restriction factor that prevents infection by gammaretroviruses. Acts by interacting with the capsid protein ca after entry of the virus into the cell. This interaction presumably disrupt the capsid thereby inactivating the viral genome, making it unable to enter host nucleus and integrate into host genome. This chain is Friend virus susceptibility protein 1 (Fv1), found in Mus musculus (Mouse).